Reading from the N-terminus, the 370-residue chain is Peptidyl-prolyl cis-trans isomerase D (370 aa).

Residue Ser-5 is modified to Phosphoserine. Residues 19 to 183 (FFDVDIGGER…KLCVIAECGE (165 aa)) enclose the PPIase cyclophilin-type domain. Lys-171 is modified (N6-acetyllysine). The segment at 185-215 (KEGDDWGIFPKDGSGDSHPDFPEDADIDLKD) is chaperone activity. Ser-198 bears the Phosphoserine mark. Positions 214–370 (KDVDKILLIS…EKAVYAKMFA (157 aa)) are interaction with HSP90AB1. TPR repeat units follow at residues 223–256 (SEDL…VDSS), 273–306 (LSCV…DPSN), and 307–340 (TKAL…APGD).

It belongs to the cyclophilin-type PPIase family. PPIase D subfamily. As to quaternary structure, identified in ESR1 or NR3C1/GCR steroid receptor-chaperone complexes. Found in HSP90 chaperone complexes with kinase clients LCK or EIF2AK1. Two monomers associate with one HSP90 homodimer. Interacts with HSP90AA1. Interacts with HSP90AB1; PPID and FKBP4 compete for binding to HSP90AB1 and the interaction is mutually exclusive with the PPID:HSPA8 interaction. Interacts with HSPA8; PPID and STIP1 but not FKBP4 compete for binding to HSPA8 and the interaction is mutually exclusive with the PPID:HSP90AB1 interaction. Interacts with S100A1 and S100A2; the interactions dissociate the PPID:HSP90AA1 interaction. Interacts with S100A6. Interacts with MYB, ILF2, XRCC6, RACK1 and RPS3. Interacts with cytoplasmic dynein 1 intermediate chain (DYNC1I1 or DYNC1I2).

It localises to the cytoplasm. The protein resides in the nucleus. The protein localises to the nucleolus. It is found in the nucleoplasm. The catalysed reaction is [protein]-peptidylproline (omega=180) = [protein]-peptidylproline (omega=0). With respect to regulation, less sensitive to inhibition by cyclosporin A than is CYP-18. PPIase that catalyzes the cis-trans isomerization of proline imidic peptide bonds in oligopeptides and may therefore assist protein folding. Proposed to act as a co-chaperone in HSP90 complexes such as in unligated steroid receptors heterocomplexes. Different co-chaperones seem to compete for association with HSP90 thus establishing distinct HSP90-co-chaperone-receptor complexes with the potential to exert tissue-specific receptor activity control. May have a preference for estrogen receptor complexes and is not found in glucocorticoid receptor complexes. May be involved in cytoplasmic dynein-dependent movement of the receptor from the cytoplasm to the nucleus. May regulate MYB by inhibiting its DNA-binding activity. Involved in regulation of AHR signaling by promoting the formation of the AHR:ARNT dimer; the function is independent of HSP90 but requires the chaperone activity region. Involved in regulation of UV radiation-induced apoptosis. This Mus musculus (Mouse) protein is Peptidyl-prolyl cis-trans isomerase D.